Here is a 518-residue protein sequence, read N- to C-terminus: Bifunctional purine biosynthesis protein PurH (518 aa).

Positions 1-144 (MSKRALISVS…KNHASVTVVC (144 aa)) constitute an MGS-like domain.

It belongs to the PurH family.

It carries out the reaction (6R)-10-formyltetrahydrofolate + 5-amino-1-(5-phospho-beta-D-ribosyl)imidazole-4-carboxamide = 5-formamido-1-(5-phospho-D-ribosyl)imidazole-4-carboxamide + (6S)-5,6,7,8-tetrahydrofolate. The catalysed reaction is IMP + H2O = 5-formamido-1-(5-phospho-D-ribosyl)imidazole-4-carboxamide. Its pathway is purine metabolism; IMP biosynthesis via de novo pathway; 5-formamido-1-(5-phospho-D-ribosyl)imidazole-4-carboxamide from 5-amino-1-(5-phospho-D-ribosyl)imidazole-4-carboxamide (10-formyl THF route): step 1/1. It functions in the pathway purine metabolism; IMP biosynthesis via de novo pathway; IMP from 5-formamido-1-(5-phospho-D-ribosyl)imidazole-4-carboxamide: step 1/1. This Lactococcus lactis subsp. lactis (strain IL1403) (Streptococcus lactis) protein is Bifunctional purine biosynthesis protein PurH.